The chain runs to 453 residues: tRNA modification GTPase MnmE (453 aa).

(6S)-5-formyl-5,6,7,8-tetrahydrofolate contacts are provided by R23, E80, and K120. Positions G216–C375 constitute a TrmE-type G domain. N226 serves as a coordination point for K(+). Residues N226–S231, T245–T251, and D270–G273 each bind GTP. Residue S230 participates in Mg(2+) binding. K(+) is bound by residues T245, I247, and T250. T251 contacts Mg(2+). A (6S)-5-formyl-5,6,7,8-tetrahydrofolate-binding site is contributed by K453.

It belongs to the TRAFAC class TrmE-Era-EngA-EngB-Septin-like GTPase superfamily. TrmE GTPase family. In terms of assembly, homodimer. Heterotetramer of two MnmE and two MnmG subunits. It depends on K(+) as a cofactor.

The protein resides in the cytoplasm. In terms of biological role, exhibits a very high intrinsic GTPase hydrolysis rate. Involved in the addition of a carboxymethylaminomethyl (cmnm) group at the wobble position (U34) of certain tRNAs, forming tRNA-cmnm(5)s(2)U34. The protein is tRNA modification GTPase MnmE of Wigglesworthia glossinidia brevipalpis.